We begin with the raw amino-acid sequence, 565 residues long: Phosphomethylpyrimidine synthase (565 aa).

Residues Asn201, Met230, Tyr259, His295, 315 to 317 (SRG), 356 to 359 (DGLR), and Glu395 each bind substrate. His399 serves as a coordination point for Zn(2+). Tyr422 is a binding site for substrate. Zn(2+) is bound at residue His463. [4Fe-4S] cluster contacts are provided by Cys543, Cys546, and Cys551.

This sequence belongs to the ThiC family. As to quaternary structure, homodimer. The cofactor is [4Fe-4S] cluster.

The enzyme catalyses 5-amino-1-(5-phospho-beta-D-ribosyl)imidazole + S-adenosyl-L-methionine = 4-amino-2-methyl-5-(phosphooxymethyl)pyrimidine + CO + 5'-deoxyadenosine + formate + L-methionine + 3 H(+). Its pathway is cofactor biosynthesis; thiamine diphosphate biosynthesis. Functionally, catalyzes the synthesis of the hydroxymethylpyrimidine phosphate (HMP-P) moiety of thiamine from aminoimidazole ribotide (AIR) in a radical S-adenosyl-L-methionine (SAM)-dependent reaction. This Ehrlichia canis (strain Jake) protein is Phosphomethylpyrimidine synthase.